A 257-amino-acid polypeptide reads, in one-letter code: 5'-nucleotidase SurE (257 aa).

Residues aspartate 8, aspartate 9, serine 40, and asparagine 92 each contribute to the a divalent metal cation site.

This sequence belongs to the SurE nucleotidase family. The cofactor is a divalent metal cation.

Its subcellular location is the cytoplasm. The enzyme catalyses a ribonucleoside 5'-phosphate + H2O = a ribonucleoside + phosphate. In terms of biological role, nucleotidase that shows phosphatase activity on nucleoside 5'-monophosphates. The polypeptide is 5'-nucleotidase SurE (Rhizobium rhizogenes (strain K84 / ATCC BAA-868) (Agrobacterium radiobacter)).